Here is a 277-residue protein sequence, read N- to C-terminus: Bifunctional protein FolD (277 aa).

NADP(+) contacts are provided by residues 156 to 158 (GRS), S183, and I224.

It belongs to the tetrahydrofolate dehydrogenase/cyclohydrolase family. In terms of assembly, homodimer.

It carries out the reaction (6R)-5,10-methylene-5,6,7,8-tetrahydrofolate + NADP(+) = (6R)-5,10-methenyltetrahydrofolate + NADPH. The enzyme catalyses (6R)-5,10-methenyltetrahydrofolate + H2O = (6R)-10-formyltetrahydrofolate + H(+). It participates in one-carbon metabolism; tetrahydrofolate interconversion. Its function is as follows. Catalyzes the oxidation of 5,10-methylenetetrahydrofolate to 5,10-methenyltetrahydrofolate and then the hydrolysis of 5,10-methenyltetrahydrofolate to 10-formyltetrahydrofolate. The sequence is that of Bifunctional protein FolD from Kosmotoga olearia (strain ATCC BAA-1733 / DSM 21960 / TBF 19.5.1).